The following is a 547-amino-acid chain: Inositol 1,4,5-trisphosphate receptor-interacting protein-like 1 (547 aa).

An N-terminal signal peptide occupies residues 1–22 (MAVISLMFLAVMYVVHHPLMVS). The Extracellular segment spans residues 23-96 (DRMDLDTLAR…PFQAGGQDGG (74 aa)). The stretch at 28-66 (DTLARSRQLEKRMSEEMRQLEMEFEERSRAAEQKQKVEN) forms a coiled coil. A helical transmembrane segment spans residues 97-117 (PLGWILGNLWNAGLFCLFLIF). Topologically, residues 118–547 (ELLRQSMQHE…LPCSPVAGGL (430 aa)) are cytoplasmic.

The protein belongs to the ITPRIP family.

The protein resides in the cell membrane. Its function is as follows. Functions as a ligand of CD3E, inhibiting TCR-CD3 complex signaling to regulate T cell activation. Induces stable CD3E-NCK1 binding, thereby preventing the CD3E-ZAP70 interaction and subsequently inhibiting the activation of the downstream ERK-NFkB signaling cascade and calcium influx. The protein is Inositol 1,4,5-trisphosphate receptor-interacting protein-like 1 (Itpripl1) of Mus musculus (Mouse).